Consider the following 275-residue polypeptide: Trans-aconitate 2-methyltransferase (275 aa).

It belongs to the methyltransferase superfamily. Tam family.

The protein resides in the cytoplasm. It carries out the reaction trans-aconitate + S-adenosyl-L-methionine = (E)-3-(methoxycarbonyl)pent-2-enedioate + S-adenosyl-L-homocysteine. In terms of biological role, catalyzes the S-adenosylmethionine monomethyl esterification of trans-aconitate. The sequence is that of Trans-aconitate 2-methyltransferase from Pseudomonas paraeruginosa (strain DSM 24068 / PA7) (Pseudomonas aeruginosa (strain PA7)).